An 84-amino-acid chain; its full sequence is Hepcidin (84 aa).

The N-terminal stretch at 1 to 24 (MALSSQIWAACLLLLLLLASLTSG) is a signal peptide. A propeptide spanning residues 25-54 (SVFPQQTGQLAELQPQDRAGARAGWTPMLQ) is cleaved from the precursor. 3 disulfides stabilise this stretch: C69–C72, C70–C78, and C73–C81.

It belongs to the hepcidin family. As to quaternary structure, interacts with SLC40A1; this interaction promotes SLC40A1 rapid ubiquitination.

It localises to the secreted. Its function is as follows. Liver-produced hormone that constitutes the main circulating regulator of iron absorption and distribution across tissues. Acts by promoting endocytosis and degradation of ferroportin/SLC40A1, leading to the retention of iron in iron-exporting cells and decreased flow of iron into plasma. Controls the major flows of iron into plasma: absorption of dietary iron in the intestine, recycling of iron by macrophages, which phagocytose old erythrocytes and other cells, and mobilization of stored iron from hepatocytes. Functionally, has strong antimicrobial activity against E.coli ML35P N.cinerea and weaker against S.epidermidis, S.aureus and group b streptococcus bacteria. Active against the fungus C.albicans. No activity against P.aeruginosa. This chain is Hepcidin (HAMP), found in Pongo abelii (Sumatran orangutan).